Consider the following 635-residue polypeptide: Interferon-induced GTP-binding protein Mx1 (635 aa).

Residues 31–309 (DLALPAIAVI…LVHHIELSLP (279 aa)) enclose the Dynamin-type G domain. Residues 41–48 (GDQSSGKS) are G1 motif. 41–48 (GDQSSGKS) is a GTP binding site. The tract at residues 66-68 (VTR) is G2 motif. The tract at residues 147–150 (DLPG) is G3 motif. Residues 147-151 (DLPGI) and 216-219 (TKPD) each bind GTP. Residues 216–219 (TKPD) form a G4 motif region. The G5 motif stretch occupies residues 248 to 251 (RCRG). One can recognise a GED domain in the interval 549-635 (LEELMRHLKS…MEARNYLVKF (87 aa)).

Belongs to the TRAFAC class dynamin-like GTPase superfamily. Dynamin/Fzo/YdjA family.

Its subcellular location is the cytoplasm. This is Interferon-induced GTP-binding protein Mx1 (mx1) from Ictalurus punctatus (Channel catfish).